The sequence spans 558 residues: NXPE family member 2 (558 aa).

Residues 17–37 traverse the membrane as a helical segment; the sequence is ASARKLFLIVLIIFVFWVVFM.

The protein belongs to the NXPE family.

The protein resides in the membrane. The polypeptide is NXPE family member 2 (Nxpe2) (Mus musculus (Mouse)).